The sequence spans 282 residues: Bifunctional protein FolD (282 aa).

NADP(+) contacts are provided by residues 160–162, Ser-185, and Ile-228; that span reads NRS.

It belongs to the tetrahydrofolate dehydrogenase/cyclohydrolase family. Homodimer.

It carries out the reaction (6R)-5,10-methylene-5,6,7,8-tetrahydrofolate + NADP(+) = (6R)-5,10-methenyltetrahydrofolate + NADPH. It catalyses the reaction (6R)-5,10-methenyltetrahydrofolate + H2O = (6R)-10-formyltetrahydrofolate + H(+). It functions in the pathway one-carbon metabolism; tetrahydrofolate interconversion. Its function is as follows. Catalyzes the oxidation of 5,10-methylenetetrahydrofolate to 5,10-methenyltetrahydrofolate and then the hydrolysis of 5,10-methenyltetrahydrofolate to 10-formyltetrahydrofolate. This chain is Bifunctional protein FolD, found in Cenarchaeum symbiosum (strain A).